Consider the following 326-residue polypeptide: G-protein coupled receptor 171 (326 aa).

The Extracellular segment spans residues 1-19; the sequence is MTNSSMFCPIYRDLEPFTY. Residues 20 to 40 form a helical membrane-spanning segment; it reads FFYLVYLIGIIGSCFATWAFI. At 41–48 the chain is on the cytoplasmic side; it reads QKSTNHRC. Residues 49–69 traverse the membrane as a helical segment; that stretch reads VSIYLINLLTADFLLTLALPV. The Extracellular segment spans residues 70 to 89; it reads KIVVDLGVAPWKLRIFHCQV. Cys87 and Cys165 are oxidised to a cystine. The helical transmembrane segment at 90–110 threads the bilayer; the sequence is TACLIYINMYLSIIFLAFVSI. At 111 to 133 the chain is on the cytoplasmic side; the sequence is DRCLQLVHSCKIYRIQEPGFAKM. The chain crosses the membrane as a helical span at residues 134 to 154; it reads ISAVVWLMVLLIMVPNMVIPI. Residues 155–182 are Extracellular-facing; it reads KNIKEKSNVGCMEFKREFGKNWHLLTNF. A helical transmembrane segment spans residues 183–203; sequence ICVAIFLNFSAIILISNFLVI. Residues 204–221 lie on the Cytoplasmic side of the membrane; sequence RQLYRNRDNANYPSVKSA. A helical membrane pass occupies residues 222-242; it reads LLNILLVTASYIICFVPYHAV. Over 243–268 the chain is Extracellular; the sequence is RIPYTLSQTEVISDCSTRIALFKAKE. A helical membrane pass occupies residues 269–289; it reads ATLLLAVSNLCFDPILYYHLS. Over 290–326 the chain is Cytoplasmic; the sequence is KAFRLKVTETFASPQKMKAREEKPRRENDVQSTGSAC. Residues 305 to 326 are disordered; the sequence is KMKAREEKPRRENDVQSTGSAC. Positions 307-318 are enriched in basic and acidic residues; sequence KAREEKPRREND.

Belongs to the G-protein coupled receptor 1 family.

The protein localises to the cell membrane. Its function is as follows. G-protein coupled receptor for Big LEN, a 16-amino acid neuropeptide produced from the precursor protein, proSAAS (encoded by PCSK1N). Acts through a G(i)-alpha-mediated pathway in response to Big LEN. Big LEN-GPR171 system plays an important role in regulating feeding and metabolism. Also plays a role in modulating fear and anxiety-like behaviors in the basolateral amygdala. Big LEN-GPR171 modulates the mu-type opioid receptor signaling and antinociception. Acts as a negative regulator T cell function. The polypeptide is G-protein coupled receptor 171 (Rattus norvegicus (Rat)).